The sequence spans 319 residues: Ribosomal RNA small subunit methyltransferase H (319 aa).

S-adenosyl-L-methionine contacts are provided by residues 39–41, D59, F83, D104, and Q111; that span reads GGH.

Belongs to the methyltransferase superfamily. RsmH family.

It is found in the cytoplasm. The catalysed reaction is cytidine(1402) in 16S rRNA + S-adenosyl-L-methionine = N(4)-methylcytidine(1402) in 16S rRNA + S-adenosyl-L-homocysteine + H(+). In terms of biological role, specifically methylates the N4 position of cytidine in position 1402 (C1402) of 16S rRNA. The polypeptide is Ribosomal RNA small subunit methyltransferase H (Ralstonia nicotianae (strain ATCC BAA-1114 / GMI1000) (Ralstonia solanacearum)).